The following is a 326-amino-acid chain: Cinnamoyl-CoA reductase CAD2 (326 aa).

Residues 14–20 (GASGYIA), Arg-39, Lys-46, 66–67 (NL), and 86–88 (TAS) contribute to the NADP(+) site. Residues Ser-130, Tyr-136, Arg-141, and Tyr-165 each coordinate (E)-coniferaldehyde. NADP(+) is bound by residues Tyr-165, Lys-169, 192–195 (PAMV), and Ser-207. Lys-169 serves as the catalytic Proton donor. The (E)-coniferaldehyde site is built by Met-194, Ser-207, Phe-226, Val-257, and Tyr-290.

The protein belongs to the NAD(P)-dependent epimerase/dehydratase family. Dihydroflavonol-4-reductase subfamily.

It is found in the cytoplasm. The enzyme catalyses (E)-cinnamaldehyde + NADP(+) + CoA = (E)-cinnamoyl-CoA + NADPH + H(+). It carries out the reaction (E)-coniferaldehyde + NADP(+) + CoA = (E)-feruloyl-CoA + NADPH + H(+). The catalysed reaction is (E)-4-coumaraldehyde + NADP(+) + CoA = (E)-4-coumaroyl-CoA + NADPH + H(+). The protein operates within aromatic compound metabolism; phenylpropanoid biosynthesis. Functionally, involved in lignin biosynthesis. Regulates the monolignol composition by catalyzing the conversion of cinnamoyl-CoAs into their corresponding cinnamaldehydes. Can use coumaraldehyde and coniferaldehyde as substrates, but barely sinapaldehyde. This chain is Cinnamoyl-CoA reductase CAD2, found in Medicago truncatula (Barrel medic).